The primary structure comprises 391 residues: Histamine H4 receptor (391 aa).

Over 1–19 (MSESNSTGILPPAAQVPLA) the chain is Extracellular. N-linked (GlcNAc...) asparagine glycosylation occurs at asparagine 5. The chain crosses the membrane as a helical span at residues 20–40 (FLMSSFAFAIMVGNAVVILAF). Residues 41-52 (VVDRNLRHRSNY) lie on the Cytoplasmic side of the membrane. Residues 53-73 (FFLNLAISDFLVGLISIPLYI) traverse the membrane as a helical segment. Over 74 to 87 (PHVLFNWNFGSGIC) the chain is Extracellular. The cysteines at positions 87 and 166 are disulfide-linked. The chain crosses the membrane as a helical span at residues 88–108 (MFWLITDYLLCTASVYNIVLI). At 109 to 131 (SYDRYQSVSNAVSYRAQHTGIMK) the chain is on the cytoplasmic side. The helical transmembrane segment at 132–152 (IVAQMVAVWILAFLVNGPMIL) threads the bilayer. Over 153–174 (ASDSWKNSTNTKDCEPGFVTEW) the chain is Extracellular. Asparagine 159 carries N-linked (GlcNAc...) asparagine glycosylation. The chain crosses the membrane as a helical span at residues 175–195 (YILTITMLLEFLLPVISVAYF). At 196-306 (NVQIYWSLWK…LLRGRKLARS (111 aa)) the chain is on the cytoplasmic side. The segment at 238-258 (TSNPGLKESAASRHSESPRRK) is disordered. A compositionally biased stretch (basic and acidic residues) spans 247–256 (AASRHSESPR). A helical membrane pass occupies residues 307–327 (LAILLSAFAICWAPYCLFTIV). Over 328–343 (LSTYPRTERPKSVWYS) the chain is Extracellular. A helical membrane pass occupies residues 344–364 (IAFWLQWFNSFVNPFLYPLCH). Over 365–391 (RRFQKAFWKILCVTKQPALSQNQSVSS) the chain is Cytoplasmic.

It belongs to the G-protein coupled receptor 1 family. Interacts with TSPAN4.

The protein localises to the cell membrane. The H4 subclass of histamine receptors could mediate the histamine signals in peripheral tissues. Displays a significant level of constitutive activity (spontaneous activity in the absence of agonist). This chain is Histamine H4 receptor (Hrh4), found in Mus musculus (Mouse).